The sequence spans 383 residues: MAASEIMNNLPMHSLDSSLRDLLNDDLFIESDESTKSVNDQRSEVFQECVNLFIKRDIKDCLEKMSEVGFIDITVFKSNPMILDLFVSACDIMPSFTKLGLTLQSEILNIFTLDTPQCIETRKIILGDLSKLLVINKFFRCCIKVIQFNLTDHTEQEEKTLELESIMSDFIFVYITKMRTTIDVVGLQELIEIFIFQVKVKLHHKKPSPNMYWALCKTLPKLSPTLKGLYLSKDVSIEDAILNSIDNKIQKDKAKSKGKQRGVKQKIHHFHEPMLHNSSEEQVKVEDAFNQRTSTDSRLQSTGTAPRKKNNDITVLAGSFWAVLKHHFTRSVLNKNGLLLTGLLLLLCLKKYKSLMAIFKHVPAAFHTVYPQIVGLLKLLASI.

At 1-331 (MAASEIMNNL…AVLKHHFTRS (331 aa)) the chain is on the cytoplasmic side. Residues 332-349 (VLNKNGLLLTGLLLLLCL) traverse the membrane as a helical segment. The Lumenal segment spans residues 350 to 383 (KKYKSLMAIFKHVPAAFHTVYPQIVGLLKLLASI).

As to quaternary structure, interacts with PEX6. Interacts with PEX19; targets PEX15 to the peroxisome. In terms of processing, phosphorylated.

The protein resides in the peroxisome membrane. It localises to the endoplasmic reticulum membrane. Functionally, peroxisomal docking factor that anchors PEX1 and PEX6 to peroxisome membranes. PEX26 is therefore required for the formation of the PEX1-PEX6 AAA ATPase complex, a complex that mediates the extraction of the PEX5 receptor from peroxisomal membrane. This Saccharomyces cerevisiae (strain ATCC 204508 / S288c) (Baker's yeast) protein is Peroxisomal membrane protein PEX15 (PEX15).